The sequence spans 254 residues: Ribosomal RNA small subunit methyltransferase G (254 aa).

The segment at 84-109 (NTESKTSLNNAETKNTNEALLTSEPF) is insert. Residues Gly-115, Phe-120, 171-172 (AE), and Arg-185 each bind S-adenosyl-L-methionine.

It belongs to the methyltransferase superfamily. RNA methyltransferase RsmG family.

The protein localises to the cytoplasm. Its function is as follows. Specifically methylates the N7 position of a guanine in 16S rRNA. The polypeptide is Ribosomal RNA small subunit methyltransferase G (Treponema denticola (strain ATCC 35405 / DSM 14222 / CIP 103919 / JCM 8153 / KCTC 15104)).